Reading from the N-terminus, the 583-residue chain is Ankyrin repeat-containing protein NPR4 (583 aa).

ANK repeat units lie at residues 68–97 (HNDTDLHVAARGGDAGALRRALDEAAAAVA), 119–148 (AGETPLVAAAERGHLEVVRELLRHLDAEGV), 154–183 (SGYDALHVAAREGRHAVVQEMLLHNRLLAK), 188–218 (ANTSPLISAATRGHTEVVKLLLELDDFGLVE), 223–252 (NGKNSLHFAARQGHVEIVKALLEKDPQLAR), 257–286 (KGQTALHMAVKGTNCDVLRALVDADPAIVM), and 291–321 (NGNTALHVATRKKRAEIVAVLLRLPDTHVNA). 4 helical membrane passes run 414 to 434 (VTVVAVLFATVAFAAIFTVPG), 452 to 472 (IFFIFNAIALFTSLAVVVVQI), 492 to 512 (LMWLASVCTTISFIASCYIVL), and 518 to 538 (WAALLVSLIGGITMAGVLGTM).

It is found in the cell membrane. Its function is as follows. Involved in salt stress tolerance. This chain is Ankyrin repeat-containing protein NPR4, found in Oryza sativa subsp. japonica (Rice).